The sequence spans 456 residues: MRSDWIAPRRGQANVTQMHYARQGVITEEMDFVARRENLPADLIRDEVARGRMIIPANINHTNLEPMAIGIASKCKVNANIGASPNASNIDEEVEKLKLAVKYGADTVMDLSTGGGNLDEIRTAIINASPVPIGTVPVYQALESVHGRIEKLSADDFLHVIEKHCEQGVDYQTIHAGLLIEHLPKVKSRITGIVSRGGGIIAQWMLYHHKQNPLYTHFRDIIEIFKRYDCSFSLGDSLRPGCLHDASDDAQLSELKTLGQLTRVAWEHDVQVMVEGPGHVPMDQIEFNVRKQMEECSEAPFYVLGPLVTDIAPGYDHITSAIGAAMAGWYGTAMLCYVTPKEHLGLPNAEDVRNGLIAYKIAAHAADIARHRPGARDRDDELSRARYAFDWNKQFDLSLDPERAREYHDETLPADIYKTAEFCSMCGPKHCPMQTKITEEDLTELEKFLEKDSALA.

Substrate contacts are provided by residues N80, M109, Y139, H175, 195-197, 236-239, and E275; these read SRG and DSLR. H279 serves as a coordination point for Zn(2+). Y302 is a binding site for substrate. A Zn(2+)-binding site is contributed by H343. C423, C426, and C431 together coordinate [4Fe-4S] cluster.

This sequence belongs to the ThiC family. [4Fe-4S] cluster is required as a cofactor.

It carries out the reaction 5-amino-1-(5-phospho-beta-D-ribosyl)imidazole + S-adenosyl-L-methionine = 4-amino-2-methyl-5-(phosphooxymethyl)pyrimidine + CO + 5'-deoxyadenosine + formate + L-methionine + 3 H(+). The protein operates within cofactor biosynthesis; thiamine diphosphate biosynthesis. In terms of biological role, catalyzes the synthesis of the hydroxymethylpyrimidine phosphate (HMP-P) moiety of thiamine from aminoimidazole ribotide (AIR) in a radical S-adenosyl-L-methionine (SAM)-dependent reaction. The chain is Phosphomethylpyrimidine synthase from Synechococcus elongatus (strain ATCC 33912 / PCC 7942 / FACHB-805) (Anacystis nidulans R2).